A 547-amino-acid chain; its full sequence is Calcium-dependent protein kinase 16 (547 aa).

The tract at residues methionine 1–lysine 53 is disordered. A lipid anchor (N-myristoyl glycine) is attached at glycine 2. The span at asparagine 37–glycine 49 shows a compositional bias: gly residues. One can recognise a Protein kinase domain in the interval tyrosine 73 to leucine 331. Residues leucine 79 to threonine 87 and lysine 102 contribute to the ATP site. The active-site Proton acceptor is aspartate 197. The segment at alanine 337–isoleucine 367 is autoinhibitory domain. EF-hand domains are found at residues glutamate 374–histidine 409, leucine 410–methionine 445, alanine 446–threonine 481, and aspartate 482–tryptophan 517. Residues aspartate 387, aspartate 389, aspartate 391, glutamate 398, aspartate 423, asparagine 425, glutamate 434, aspartate 459, aspartate 461, asparagine 463, tyrosine 465, glutamate 470, aspartate 495, aspartate 497, aspartate 499, lysine 501, and glutamate 506 each contribute to the Ca(2+) site.

The protein belongs to the protein kinase superfamily. Ser/Thr protein kinase family. CDPK subfamily.

It is found in the membrane. The enzyme catalyses L-seryl-[protein] + ATP = O-phospho-L-seryl-[protein] + ADP + H(+). It catalyses the reaction L-threonyl-[protein] + ATP = O-phospho-L-threonyl-[protein] + ADP + H(+). Its activity is regulated as follows. Activated by calcium. Autophosphorylation may play an important role in the regulation of the kinase activity. In terms of biological role, may play a role in signal transduction pathways that involve calcium as a second messenger. The sequence is that of Calcium-dependent protein kinase 16 from Oryza sativa subsp. japonica (Rice).